The primary structure comprises 644 residues: MADYSTVPPPSSGSAGGGGGGGGGGGVNDAFKDALQRARQIAAKIGGDAGTSLNSNDYGYGGQKRPLEDGDQPDAKKVAPQNDSFGTQLPPMHQQQSRSVMTEEYKVPDGMVGFIIGRGGEQISRIQQESGCKIQIAPDSGGLPERSCMLTGTPESVQSAKRLLDQIVEKGRPAPGFHHGDGPGNAVQEIMIPASKAGLVIGKGGETIKQLQERAGVKMVMIQDGPQNTGADKPLRITGDPYKVQQAKEMVLELIRDQGGFREVRNEYGSRIGGNEGIDVPIPRFAVGIVIGRNGEMIKKIQNDAGVRIQFKPDDGTTPERIAQITGPPDRCQHAAEIITDLLRSVQAGNPGGPGPGGRGRGRGQGNWNMGPPGGLQEFNFIVPTGKTGLIIGKGGETIKSISQQSGARIELQRNPPPNADPNMKLFTIRGTPQQIDYARQLIEEKIGGPVNPLGPPVPHGPHGVPGPHGPPGPPGPGTPMGPYNPAPYNPGPPGPAPHGPPAPYAPQGWGNAYPHWQQQAPPDPAKAGTDPNSAAWAAYYAHYYQQQAQPPPAAPAGAPTTTQTNGQGDQQNPAPAGQVDYTKAWEEYYKKMGQAVPAPTGAPPGGQPDYSAAWAEYYRQQAAYYAQTSPQGMPQHPPAPQGQ.

Disordered stretches follow at residues 1–31 (MADY…NDAF) and 44–94 (KIGG…PMHQ). The residue at position 2 (alanine 2) is an N-acetylalanine. Residues 14-27 (SAGGGGGGGGGGGV) show a composition bias toward gly residues. Residues serine 52 and serine 55 each carry the phosphoserine modification. Positions 65–77 (RPLEDGDQPDAKK) are enriched in basic and acidic residues. The segment covering 81–94 (QNDSFGTQLPPMHQ) has biased composition (polar residues). 3 KH domains span residues 100 to 164 (VMTE…KRLL), 185 to 251 (NAVQ…KEMV), and 275 to 339 (NEGI…AEII). At serine 140 the chain carries Phosphoserine. The residue at position 153 (threonine 153) is a Phosphothreonine. An omega-N-methylarginine mark is found at arginine 321, arginine 359, arginine 361, and arginine 363. The tract at residues 346–365 (VQAGNPGGPGPGGRGRGRGQ) is disordered. Gly residues predominate over residues 350-365 (NPGGPGPGGRGRGRGQ). One can recognise a KH 4 domain in the interval 376-443 (LQEFNFIVPT…QQIDYARQLI (68 aa)). A Phosphothreonine modification is found at threonine 432. Disordered stretches follow at residues 447-532 (IGGP…GTDP) and 548-580 (QAQP…AGQV). Pro residues predominate over residues 468–505 (PHGPPGPPGPGTPMGPYNPAPYNPGPPGPAPHGPPAPY). Residues 556-573 (PAGAPTTTQTNGQGDQQN) are compositionally biased toward low complexity. Serine 630 is modified (phosphoserine).

Found in a complex with PUF60 and far upstream element (FUSE) DNA segment. Interacts with PUF60 and JTV1. Ubiquitinated. This targets the protein for proteasome-mediated degradation.

Its subcellular location is the nucleus. In terms of biological role, regulates MYC expression by binding to a single-stranded far-upstream element (FUSE) upstream of the MYC promoter. May act both as activator and repressor of transcription. The polypeptide is Far upstream element-binding protein 1 (FUBP1) (Homo sapiens (Human)).